The sequence spans 238 residues: Survival of motor neuron-related-splicing factor 30 (238 aa).

Positions 72–132 constitute a Tudor domain; the sequence is SWKVGDKCMA…KPVEEGRKAK (61 aa). The Nuclear localization signal signature appears at 142–160; the sequence is KKEMIAQQREYKKKKALKK. At Ser201 the chain carries Phosphoserine. Residue Lys219 is modified to N6-acetyllysine.

Belongs to the SMN family. Associates with spliceosomes. Associates with U4/U5/U6 tri-snRNP and with U2 snRNP. Interacts (via Tudor domain) with SNRPD3 (via C-terminus); the interaction is direct. In terms of tissue distribution, detected at intermediate levels in skeletal muscle, and at low levels in heart and pancreas.

Its subcellular location is the nucleus speckle. The protein localises to the nucleus. It localises to the cajal body. Functionally, involved in spliceosome assembly. This chain is Survival of motor neuron-related-splicing factor 30 (SMNDC1), found in Homo sapiens (Human).